We begin with the raw amino-acid sequence, 485 residues long: Glutamyl-tRNA(Gln) amidotransferase subunit A (485 aa).

Active-site charge relay system residues include lysine 76 and serine 151. The active-site Acyl-ester intermediate is the serine 175.

The protein belongs to the amidase family. GatA subfamily. In terms of assembly, heterotrimer of A, B and C subunits.

It carries out the reaction L-glutamyl-tRNA(Gln) + L-glutamine + ATP + H2O = L-glutaminyl-tRNA(Gln) + L-glutamate + ADP + phosphate + H(+). Its function is as follows. Allows the formation of correctly charged Gln-tRNA(Gln) through the transamidation of misacylated Glu-tRNA(Gln) in organisms which lack glutaminyl-tRNA synthetase. The reaction takes place in the presence of glutamine and ATP through an activated gamma-phospho-Glu-tRNA(Gln). This Chlorobium luteolum (strain DSM 273 / BCRC 81028 / 2530) (Pelodictyon luteolum) protein is Glutamyl-tRNA(Gln) amidotransferase subunit A.